We begin with the raw amino-acid sequence, 904 residues long: Patched domain-containing protein 4 (904 aa).

The chain crosses the membrane as a helical span at residues 41–61 (HPVFFLTVPAVLTITFGLSAL). Asparagine 149 carries N-linked (GlcNAc...) asparagine glycosylation. Residues 291–450 (TRSKVLVSLV…FSFFGSCLVF (160 aa)) enclose the SSD domain. 6 consecutive transmembrane segments (helical) span residues 295 to 312 (VLVSLVLILTTATLSSSM), 323 to 343 (GLLGVLTVCISIATAAGIFFI), 351 to 371 (TLLGIPFFAMGHGTKGVFELL), 394 to 414 (VMVTYTMTSSLYFITFGMGAS), 431 to 451 (VSILLNYFYIFSFFGSCLVFA), and 523 to 543 (PFVVILYLIYASFSFMGCLQI). Asparagine 625 is a glycosylation site (N-linked (GlcNAc...) asparagine). Helical transmembrane passes span 718–738 (PVLIAGFGVLLVLILTFFLVI), 744–764 (FWLILSVTSIELGVLGLMTLW), and 771–791 (ISILCLIYTLNFAIDHCAPLL). Asparagine 820 carries an N-linked (GlcNAc...) asparagine glycan. 2 helical membrane-spanning segments follow: residues 823–843 (SFLIGLLPLLFVPSNLTFTLF) and 845–865 (CLLLTGGCTLLHCFVILPVFL).

Belongs to the patched family.

It is found in the membrane. Its function is as follows. Could act as a repressor of canonical hedgehog signaling by antagonizing the effects of SMO, as suggested by down-regulation of hedgehog target genes, including GLI1, PTCH1, and PTCH2 in PTCHD4-expressing cells. This chain is Patched domain-containing protein 4 (Ptchd4), found in Mus musculus (Mouse).